We begin with the raw amino-acid sequence, 623 residues long: Bifunctional methionine biosynthesis protein MetXA/MetW (623 aa).

Residues 1–17 (MTSGRSTRVTMFESQAS) show a composition bias toward polar residues. The tract at residues 1 to 30 (MTSGRSTRVTMFESQASMGEPSNEDLSSTD) is disordered. An AB hydrolase-1 domain is found at 77–385 (NAVLVCHAVS…TTNAGHDAFL (309 aa)). Residue Ser-183 is the Nucleophile of the active site. Arg-253 contacts substrate. Active-site residues include Asp-348 and His-381. Asp-382 is a binding site for substrate. The tract at residues 417 to 619 (NVDEESILEI…NADTAVIAFH (203 aa)) is metW.

It in the N-terminal section; belongs to the AB hydrolase superfamily. MetX family. In the C-terminal section; belongs to the MetW family. In terms of assembly, homodimer.

It localises to the cytoplasm. The enzyme catalyses L-homoserine + acetyl-CoA = O-acetyl-L-homoserine + CoA. The protein operates within amino-acid biosynthesis; L-methionine biosynthesis via de novo pathway; O-acetyl-L-homoserine from L-homoserine: step 1/1. Its function is as follows. Transfers an acetyl group from acetyl-CoA to L-homoserine, forming acetyl-L-homoserine. The sequence is that of Bifunctional methionine biosynthesis protein MetXA/MetW from Rhodopirellula baltica (strain DSM 10527 / NCIMB 13988 / SH1).